The chain runs to 445 residues: Arginine/agmatine antiporter (445 aa).

Residues 1-9 lie on the Cytoplasmic side of the membrane; the sequence is MSSDADAHK. The chain crosses the membrane as a helical span at residues 10–30; the sequence is VGLIPVTLMVSGNIMGSGVFL. Isoleucine 23 lines the agmatine pocket. Residues isoleucine 23 and serine 26 each contribute to the L-arginine site. The Periplasmic portion of the chain corresponds to 31–38; the sequence is LPANLAAT. Residues 39 to 59 traverse the membrane as a helical segment; the sequence is GGIAIYGWLVTIIGALALSMV. At 60 to 98 the chain is on the cytoplasmic side; the sequence is YAKMSSLDPSPGGSYAYARRCFGPFLGYQTNVLYWLACW. Alanine 96, cysteine 97, and asparagine 101 together coordinate agmatine. Alanine 96 contacts L-arginine. Residues 99–119 traverse the membrane as a helical segment; that stretch reads IGNIAMVVIGVGYLSYFFPIL. Residues 120–122 are Periplasmic-facing; that stretch reads KDP. Residues 123–143 traverse the membrane as a helical segment; it reads LVLTLTCVAVLWIFVLLNIVG. Residues 144-152 are Cytoplasmic-facing; it reads PKMITRVQA. Residues 153-173 traverse the membrane as a helical segment; the sequence is VATVLALVPIVGIAVFGWFWF. At 174-196 the chain is on the periplasmic side; sequence KGETYMAAWNVSGMNTFGAIQST. Residues 197-217 traverse the membrane as a helical segment; sequence LNVTLWSFIGVESASVAAGVV. 2 residues coordinate L-arginine: tryptophan 202 and isoleucine 205. Position 205 (isoleucine 205) interacts with agmatine. Residues 218-225 are Cytoplasmic-facing; the sequence is KNPKRNVP. The chain crosses the membrane as a helical span at residues 226–246; the sequence is IATIGGVLIAAVCYVLSTTAI. The Periplasmic portion of the chain corresponds to 247-275; sequence MGMIPNAALRVSASPFGDAARMALGDTAG. Residues 276 to 296 traverse the membrane as a helical segment; sequence AIVSFCAAAGCLGSLGGWTLL. Tryptophan 293 contributes to the agmatine binding site. At 297-319 the chain is on the cytoplasmic side; the sequence is AGQTAKAAADDGLFPPIFARVNK. A helical membrane pass occupies residues 320-340; the sequence is AGTPVAGLLIVGVLMTIFQFS. Residues 341–355 are Periplasmic-facing; it reads SMSPNAAKEFGLVSS. Residues 356 to 376 form a helical membrane-spanning segment; it reads VSVIFTLVPYLYTCAALLLLG. Residue serine 357 participates in L-arginine binding. Residues 377–385 lie on the Cytoplasmic side of the membrane; the sequence is HGHFGKARP. The chain crosses the membrane as a helical span at residues 386 to 406; it reads LYLLITFVAFVYCIWAVIGSG. Topologically, residues 407-408 are periplasmic; sequence AK. Residues 409–429 form a helical membrane-spanning segment; that stretch reads EVMWSFVTLMVITALYALNYN. The Cytoplasmic portion of the chain corresponds to 430–445; that stretch reads RIHKNPYPLDAPVKQD.

The protein belongs to the amino acid-polyamine-organocation (APC) superfamily. Basic amino acid/polyamine antiporter (APA) (TC 2.A.3.2) family. In terms of assembly, homodimer; each subunit has its own individual transport capacity.

The protein resides in the cell inner membrane. The enzyme catalyses agmatine(in) + L-arginine(out) = agmatine(out) + L-arginine(in). In terms of biological role, major component of the acid-resistance (AR) system allowing enteric pathogens to survive the acidic environment in the stomach. Exchanges extracellular arginine for its intracellular decarboxylation product agmatine (Agm) thereby expelling intracellular protons. Probably undergoes several conformational states in order to translocate the substrate across the membrane; keeps the substrate accessible to only 1 side of the membrane at a time by opening and closing 3 membrane-internal gates. The chain is Arginine/agmatine antiporter (adiC) from Salmonella typhi.